Here is a 141-residue protein sequence, read N- to C-terminus: MATIKVDVVSAEEQIFSGQAKFVALPGEAGELGILPGHTPLITRIRPGAVRIEAENGEEEFVFVAGGILEIQPGAVTVLADTAIRGKDLDEAKAEDARKRAEEALQNTGSNLEYATAQAELAYATAQLAAIQRLRKLRGQN.

The protein belongs to the ATPase epsilon chain family. In terms of assembly, F-type ATPases have 2 components, CF(1) - the catalytic core - and CF(0) - the membrane proton channel. CF(1) has five subunits: alpha(3), beta(3), gamma(1), delta(1), epsilon(1). CF(0) has three main subunits: a, b and c.

The protein localises to the cell inner membrane. Its function is as follows. Produces ATP from ADP in the presence of a proton gradient across the membrane. This Paraburkholderia phytofirmans (strain DSM 17436 / LMG 22146 / PsJN) (Burkholderia phytofirmans) protein is ATP synthase epsilon chain.